The following is a 224-amino-acid chain: Glutathione peroxidase 3 (224 aa).

The first 18 residues, 1–18 (MAPGSVLSLAVALATIIG), serve as a signal peptide directing secretion. An N-linked (GlcNAc...) asparagine glycan is attached at Asn38. Cys73 is a catalytic residue.

Belongs to the glutathione peroxidase family.

The protein resides in the secreted. Its subcellular location is the extracellular space. The catalysed reaction is 2 glutathione + H2O2 = glutathione disulfide + 2 H2O. In Caenorhabditis elegans, this protein is Glutathione peroxidase 3 (gpx-3).